The following is a 181-amino-acid chain: Protein Syd (181 aa).

The protein belongs to the Syd family.

The protein localises to the cell inner membrane. Interacts with the SecY protein in vivo. May bind preferentially to an uncomplexed state of SecY, thus functioning either as a chelating agent for excess SecY in the cell or as a regulatory factor that negatively controls the translocase function. This chain is Protein Syd, found in Alteromonas mediterranea (strain DSM 17117 / CIP 110805 / LMG 28347 / Deep ecotype).